Consider the following 76-residue polypeptide: Conotoxin ArMLCL-022 (76 aa).

Positions 1 to 19 are cleaved as a signal peptide; it reads MLCLPVFIILLLLASTAAS. Residues 20–52 constitute a propeptide that is removed on maturation; it reads NPLETRIQSDLIRAALEDADMKTERGFLGVLMK.

Belongs to the conotoxin T superfamily. As to expression, expressed by the venom duct.

The protein localises to the secreted. The chain is Conotoxin ArMLCL-022 from Conus arenatus (Sand-dusted cone).